Reading from the N-terminus, the 929-residue chain is Isoleucine--tRNA ligase (929 aa).

A 'HIGH' region motif is present at residues 58 to 68 (PYANGDIHIGH). Glu-563 lines the L-isoleucyl-5'-AMP pocket. The 'KMSKS' region signature appears at 605–609 (KMSKS). Lys-608 serves as a coordination point for ATP. Zn(2+) is bound by residues Cys-892, Cys-895, Cys-912, and Cys-915.

The protein belongs to the class-I aminoacyl-tRNA synthetase family. IleS type 1 subfamily. Monomer. Requires Zn(2+) as cofactor.

Its subcellular location is the cytoplasm. It carries out the reaction tRNA(Ile) + L-isoleucine + ATP = L-isoleucyl-tRNA(Ile) + AMP + diphosphate. Functionally, catalyzes the attachment of isoleucine to tRNA(Ile). As IleRS can inadvertently accommodate and process structurally similar amino acids such as valine, to avoid such errors it has two additional distinct tRNA(Ile)-dependent editing activities. One activity is designated as 'pretransfer' editing and involves the hydrolysis of activated Val-AMP. The other activity is designated 'posttransfer' editing and involves deacylation of mischarged Val-tRNA(Ile). In Neisseria meningitidis serogroup B (strain ATCC BAA-335 / MC58), this protein is Isoleucine--tRNA ligase.